We begin with the raw amino-acid sequence, 154 residues long: NAD(P)H-quinone oxidoreductase subunit N (154 aa).

The protein belongs to the complex I NdhN subunit family. NDH-1 can be composed of about 15 different subunits; different subcomplexes with different compositions have been identified which probably have different functions.

It is found in the cellular thylakoid membrane. The catalysed reaction is a plastoquinone + NADH + (n+1) H(+)(in) = a plastoquinol + NAD(+) + n H(+)(out). The enzyme catalyses a plastoquinone + NADPH + (n+1) H(+)(in) = a plastoquinol + NADP(+) + n H(+)(out). NDH-1 shuttles electrons from an unknown electron donor, via FMN and iron-sulfur (Fe-S) centers, to quinones in the respiratory and/or the photosynthetic chain. The immediate electron acceptor for the enzyme in this species is believed to be plastoquinone. Couples the redox reaction to proton translocation, and thus conserves the redox energy in a proton gradient. Cyanobacterial NDH-1 also plays a role in inorganic carbon-concentration. The polypeptide is NAD(P)H-quinone oxidoreductase subunit N (Prochlorococcus marinus (strain NATL2A)).